An 811-amino-acid chain; its full sequence is G-type lectin S-receptor-like serine/threonine-protein kinase LECRK3 (811 aa).

An N-terminal signal peptide occupies residues 1–23; that stretch reads MAHLLFLPILQLLLLYCTKSAQA. The Bulb-type lectin domain maps to 24-153; the sequence is QLNISIGSSL…DGATKWESFG (130 aa). Topologically, residues 24–464 are extracellular; the sequence is QLNISIGSSL…DKKYWILGSS (441 aa). N-linked (GlcNAc...) asparagine glycans are attached at residues Asn-26, Asn-39, Asn-59, Asn-219, Asn-226, Asn-237, and Asn-242. An EGF-like; atypical domain is found at 292-344; the sequence is PENICQSIQTMVGSGACGFNSYCTIDGTKNTTSCLCPQNYKFIDDKRKYKGCR. 5 disulfide bridges follow: Cys-296–Cys-314, Cys-308–Cys-325, Cys-327–Cys-343, Cys-389–Cys-411, and Cys-393–Cys-399. Asn-321 is a glycosylation site (N-linked (GlcNAc...) asparagine). The region spanning 352 to 430 is the PAN domain; sequence CDLDETTAML…GKMDVNVPRT (79 aa). The helical transmembrane segment at 465-485 threads the bilayer; it reads LLFGSSVLVNFLLISVMLFGT. The Cytoplasmic segment spans residues 486–811; sequence YCSITSRKKI…DPSSYISSLA (326 aa). The Protein kinase domain maps to 521–795; it reads GGFQEVLGTG…KVTQMLDGAV (275 aa). ATP contacts are provided by residues 527 to 535 and Lys-551; that span reads LGTGASGVV. Asp-645 serves as the catalytic Proton acceptor.

The protein belongs to the protein kinase superfamily. Ser/Thr protein kinase family.

The protein resides in the membrane. The enzyme catalyses L-seryl-[protein] + ATP = O-phospho-L-seryl-[protein] + ADP + H(+). It carries out the reaction L-threonyl-[protein] + ATP = O-phospho-L-threonyl-[protein] + ADP + H(+). In terms of biological role, involved in resistance against the herbivorous insect brown planthopper (N.lugens, BPH). Member of the BPH3 (BPH resistance locus 3) cluster which contains LECRK1, LECRK2 and LECRK3. The polypeptide is G-type lectin S-receptor-like serine/threonine-protein kinase LECRK3 (Oryza sativa subsp. indica (Rice)).